The primary structure comprises 319 residues: Protease HtpX homolog (319 aa).

Transmembrane regions (helical) follow at residues 3 to 23 and 32 to 52; these read LTVL…AWAL and TGVA…QWLF. Residue histidine 134 coordinates Zn(2+). Glutamate 135 is a catalytic residue. Histidine 138 is a binding site for Zn(2+). The next 2 helical transmembrane spans lie at 146 to 166 and 182 to 202; these read VILA…TLVW and MALV…QLIV. Zn(2+) is bound at residue glutamate 210.

It belongs to the peptidase M48B family. Zn(2+) serves as cofactor.

The protein localises to the cell membrane. This Aeropyrum pernix (strain ATCC 700893 / DSM 11879 / JCM 9820 / NBRC 100138 / K1) protein is Protease HtpX homolog.